Here is a 159-residue protein sequence, read N- to C-terminus: UPF0336 protein MAP_4107 (159 aa).

The protein belongs to the UPF0336 family.

The polypeptide is UPF0336 protein MAP_4107 (Mycolicibacterium paratuberculosis (strain ATCC BAA-968 / K-10) (Mycobacterium paratuberculosis)).